A 571-amino-acid chain; its full sequence is Proline--tRNA ligase 1 (571 aa).

It belongs to the class-II aminoacyl-tRNA synthetase family. ProS type 1 subfamily. In terms of assembly, homodimer.

The protein resides in the cytoplasm. The catalysed reaction is tRNA(Pro) + L-proline + ATP = L-prolyl-tRNA(Pro) + AMP + diphosphate. In terms of biological role, catalyzes the attachment of proline to tRNA(Pro) in a two-step reaction: proline is first activated by ATP to form Pro-AMP and then transferred to the acceptor end of tRNA(Pro). As ProRS can inadvertently accommodate and process non-cognate amino acids such as alanine and cysteine, to avoid such errors it has two additional distinct editing activities against alanine. One activity is designated as 'pretransfer' editing and involves the tRNA(Pro)-independent hydrolysis of activated Ala-AMP. The other activity is designated 'posttransfer' editing and involves deacylation of mischarged Ala-tRNA(Pro). The misacylated Cys-tRNA(Pro) is not edited by ProRS. This is Proline--tRNA ligase 1 from Clostridioides difficile (strain 630) (Peptoclostridium difficile).